Reading from the N-terminus, the 114-residue chain is Amphinase-3 (114 aa).

H15 acts as the Proton acceptor in catalysis. N-linked (GlcNAc...) asparagine glycosylation occurs at N25. Disulfide bonds link C26-C79, C41-C85, C59-C100, and C97-C114. Substrate is bound at residue K42–T46. 2 N-linked (GlcNAc...) asparagine glycosylation sites follow: N67 and N91. The Proton donor role is filled by H107.

Belongs to the pancreatic ribonuclease family. Monomer. There are at least five different forms arising from glycan heterogeneity.

Its subcellular location is the secreted. Its function is as follows. Endonuclease, hydrolyzes highly polymerized RNA, poly(U) and poly(C), and the dinucleotides CpA and UpA. More active towards rCA than rUA or rUG. Has cytotoxic activity against cultured human submaxillary gland carcinoma cells. The polypeptide is Amphinase-3 (Lithobates pipiens (Northern leopard frog)).